Consider the following 928-residue polypeptide: Isoleucine--tRNA ligase (928 aa).

The 'HIGH' region motif lies at 57 to 67; it reads PFANGNIHMGH. Glu-554 is a binding site for L-isoleucyl-5'-AMP. The 'KMSKS' region signature appears at 595 to 599; it reads KMSKS. Residue Lys-598 coordinates ATP. Cys-887, Cys-890, Cys-907, and Cys-910 together coordinate Zn(2+).

Belongs to the class-I aminoacyl-tRNA synthetase family. IleS type 1 subfamily. Monomer. The cofactor is Zn(2+).

Its subcellular location is the cytoplasm. The enzyme catalyses tRNA(Ile) + L-isoleucine + ATP = L-isoleucyl-tRNA(Ile) + AMP + diphosphate. Its function is as follows. Catalyzes the attachment of isoleucine to tRNA(Ile). As IleRS can inadvertently accommodate and process structurally similar amino acids such as valine, to avoid such errors it has two additional distinct tRNA(Ile)-dependent editing activities. One activity is designated as 'pretransfer' editing and involves the hydrolysis of activated Val-AMP. The other activity is designated 'posttransfer' editing and involves deacylation of mischarged Val-tRNA(Ile). This is Isoleucine--tRNA ligase from Lactobacillus johnsonii (strain CNCM I-12250 / La1 / NCC 533).